Consider the following 304-residue polypeptide: N-acetyl-D-glucosamine kinase (304 aa).

ATP-binding positions include Gly-4 to Lys-11 and Gly-133 to Val-140. His-157, Cys-177, Cys-179, and Cys-184 together coordinate Zn(2+).

The protein belongs to the ROK (NagC/XylR) family. NagK subfamily.

The enzyme catalyses N-acetyl-D-glucosamine + ATP = N-acetyl-D-glucosamine 6-phosphate + ADP + H(+). The protein operates within cell wall biogenesis; peptidoglycan recycling. Catalyzes the phosphorylation of N-acetyl-D-glucosamine (GlcNAc) derived from cell-wall degradation, yielding GlcNAc-6-P. In Yersinia pseudotuberculosis serotype O:1b (strain IP 31758), this protein is N-acetyl-D-glucosamine kinase.